Reading from the N-terminus, the 259-residue chain is Tryptophan synthase alpha chain (259 aa).

Catalysis depends on proton acceptor residues E35 and D46.

Belongs to the TrpA family. In terms of assembly, tetramer of two alpha and two beta chains.

It catalyses the reaction (1S,2R)-1-C-(indol-3-yl)glycerol 3-phosphate + L-serine = D-glyceraldehyde 3-phosphate + L-tryptophan + H2O. The protein operates within amino-acid biosynthesis; L-tryptophan biosynthesis; L-tryptophan from chorismate: step 5/5. The alpha subunit is responsible for the aldol cleavage of indoleglycerol phosphate to indole and glyceraldehyde 3-phosphate. The protein is Tryptophan synthase alpha chain of Methanococcus vannielii (strain ATCC 35089 / DSM 1224 / JCM 13029 / OCM 148 / SB).